We begin with the raw amino-acid sequence, 299 residues long: Peroxisomal biogenesis factor 19 (299 aa).

The disordered stretch occupies residues 1–63 (MAAAEEGCDA…SPGDTAKDAL (63 aa)). The residue at position 2 (A2) is an N-acetylalanine. Residues 2–56 (AAAEEGCDAGVEADRELEELLESALDDFDKAKPSPAPPPTTSAPDASGPQKKSPG) are docking to the peroxisome membrane and binding to PEX3. The segment at 2–91 (AAAEEGCDAG…QATAEFEKAM (90 aa)) is necessary for PEX19 function on peroxisome biogenesis. Acidic residues predominate over residues 16-27 (RELEELLESALD). 3 positions are modified to phosphoserine: S35, S54, and S66. A Phosphothreonine modification is found at T236. At C296 the chain carries Cysteine methyl ester. C296 carries S-farnesyl cysteine lipidation. Positions 297–299 (LIM) are cleaved as a propeptide — removed in mature form.

Belongs to the peroxin-19 family. In terms of assembly, interacts with a broad range of peroxisomal membrane proteins, including PEX3, PEX10, PEX11A, PEX11B, PEX12, PEX13, PEX14 and PEX16, PXMP2/PMP22, PXMP4/PMP24, SLC25A17/PMP34, ABCD1/ALDP, ABCD2/ALDRP, and ABCD3/PMP70. Also interacts with the tumor suppressor CDKN2A/p19ARF. As to expression, ubiquitous.

The protein resides in the cytoplasm. Its subcellular location is the peroxisome membrane. In terms of biological role, necessary for early peroxisomal biogenesis. Acts both as a cytosolic chaperone and as an import receptor for peroxisomal membrane proteins (PMPs). Binds and stabilizes newly synthesized PMPs in the cytoplasm by interacting with their hydrophobic membrane-spanning domains, and targets them to the peroxisome membrane by binding to the integral membrane protein PEX3. Excludes CDKN2A from the nucleus and prevents its interaction with MDM2, which results in active degradation of TP53. The sequence is that of Peroxisomal biogenesis factor 19 (PEX19) from Cricetulus griseus (Chinese hamster).